The sequence spans 97 residues: UPF0213 protein BLi00048/BL00536 (97 aa).

The 76-residue stretch at 4–79 folds into the GIY-YIG domain; it reads NSHYFYVLSC…KKLSRKNKER (76 aa).

Belongs to the UPF0213 family.

The protein is UPF0213 protein BLi00048/BL00536 of Bacillus licheniformis (strain ATCC 14580 / DSM 13 / JCM 2505 / CCUG 7422 / NBRC 12200 / NCIMB 9375 / NCTC 10341 / NRRL NRS-1264 / Gibson 46).